The chain runs to 417 residues: Serine hydroxymethyltransferase (417 aa).

(6S)-5,6,7,8-tetrahydrofolate-binding positions include leucine 121 and 125 to 127; that span reads GHL. Lysine 229 is modified (N6-(pyridoxal phosphate)lysine). 355 to 357 lines the (6S)-5,6,7,8-tetrahydrofolate pocket; the sequence is SPF.

The protein belongs to the SHMT family. Homodimer. Pyridoxal 5'-phosphate serves as cofactor.

Its subcellular location is the cytoplasm. The catalysed reaction is (6R)-5,10-methylene-5,6,7,8-tetrahydrofolate + glycine + H2O = (6S)-5,6,7,8-tetrahydrofolate + L-serine. The protein operates within one-carbon metabolism; tetrahydrofolate interconversion. It functions in the pathway amino-acid biosynthesis; glycine biosynthesis; glycine from L-serine: step 1/1. Its function is as follows. Catalyzes the reversible interconversion of serine and glycine with tetrahydrofolate (THF) serving as the one-carbon carrier. This reaction serves as the major source of one-carbon groups required for the biosynthesis of purines, thymidylate, methionine, and other important biomolecules. Also exhibits THF-independent aldolase activity toward beta-hydroxyamino acids, producing glycine and aldehydes, via a retro-aldol mechanism. This is Serine hydroxymethyltransferase from Photorhabdus laumondii subsp. laumondii (strain DSM 15139 / CIP 105565 / TT01) (Photorhabdus luminescens subsp. laumondii).